The sequence spans 344 residues: Phenylalanine--tRNA ligase alpha subunit (344 aa).

A Mg(2+)-binding site is contributed by Glu-255.

It belongs to the class-II aminoacyl-tRNA synthetase family. Phe-tRNA synthetase alpha subunit type 1 subfamily. In terms of assembly, tetramer of two alpha and two beta subunits. It depends on Mg(2+) as a cofactor.

It localises to the cytoplasm. It catalyses the reaction tRNA(Phe) + L-phenylalanine + ATP = L-phenylalanyl-tRNA(Phe) + AMP + diphosphate + H(+). The polypeptide is Phenylalanine--tRNA ligase alpha subunit (Sulfurihydrogenibium sp. (strain YO3AOP1)).